The sequence spans 528 residues: Probable serine protease HtrA1 (528 aa).

The interval 1-70 (MDTRVDTDNA…RPSGVQGSFV (70 aa)) is disordered. Residues 1 to 178 (MDTRVDTDNA…DVLFGGKVSY (178 aa)) are Cytoplasmic-facing. Positions 31 to 40 (NNGGPNGGGR) are enriched in gly residues. A helical transmembrane segment spans residues 179 to 199 (LALGILVAIALVIGGIGGVIG). The Periplasmic segment spans residues 200-528 (RKTAEVVDAF…LTVKPDPDST (329 aa)). Active-site charge relay system residues include His-270, Asp-306, and Ser-387. Positions 426–487 (LVANSLIKDG…VIVKVGNRAV (62 aa)) constitute a PDZ domain.

This sequence belongs to the peptidase S1C family. As to quaternary structure, the C-terminal region exhibits both monomeric and trimeric forms in solution.

The protein localises to the cell inner membrane. It carries out the reaction Acts on substrates that are at least partially unfolded. The cleavage site P1 residue is normally between a pair of hydrophobic residues, such as Val-|-Val.. Functionally, essential protein that may act as a regulatory protease that is conditionally activated upon appropriate environmental triggers. The chain is Probable serine protease HtrA1 from Mycobacterium tuberculosis (strain ATCC 25618 / H37Rv).